A 128-amino-acid polypeptide reads, in one-letter code: L-ectoine synthase (128 aa).

Belongs to the ectoine synthase family.

It catalyses the reaction (2S)-4-acetamido-2-aminobutanoate = L-ectoine + H2O. It participates in amine and polyamine biosynthesis; ectoine biosynthesis; L-ectoine from L-aspartate 4-semialdehyde: step 3/3. Its function is as follows. Catalyzes the circularization of gamma-N-acetyl-alpha,gamma-diaminobutyric acid (ADABA) to ectoine (1,4,5,6-tetrahydro-2-methyl-4-pyrimidine carboxylic acid), which is an excellent osmoprotectant. The protein is L-ectoine synthase of Aliivibrio fischeri (strain MJ11) (Vibrio fischeri).